We begin with the raw amino-acid sequence, 906 residues long: uncharacterized protein (906 aa).

2 disordered regions span residues 231-322 (KEDA…PSTI) and 865-906 (AGAY…DEDE). The segment covering 236-250 (TTKQTTTTTTTTPQT) has biased composition (low complexity). The span at 264–281 (TPTPAPAPKPTTPKPTPA) shows a compositional bias: pro residues. The span at 302–314 (SVNNIPTPSDTNE) shows a compositional bias: polar residues. The segment covering 867-906 (AYEDDDDDEGEGNEDDEDNDENEDEDEGEGEGDSSEDEDE) has biased composition (acidic residues).

This is an uncharacterized protein from Dictyostelium sp. (strain GA11) (Slime mold).